The sequence spans 383 residues: tRNA-specific 2-thiouridylase MnmA (383 aa).

Residues 29-36 (GMSGGVDS) and M55 each bind ATP. The segment at 115–117 (NPD) is interaction with target base in tRNA. The active-site Nucleophile is C120. C120 and C217 form a disulfide bridge. Residue G145 coordinates ATP. The tract at residues 167 to 169 (KDQ) is interaction with tRNA. The active-site Cysteine persulfide intermediate is C217. An interaction with tRNA region spans residues 329–330 (RY).

It belongs to the MnmA/TRMU family.

Its subcellular location is the cytoplasm. It carries out the reaction S-sulfanyl-L-cysteinyl-[protein] + uridine(34) in tRNA + AH2 + ATP = 2-thiouridine(34) in tRNA + L-cysteinyl-[protein] + A + AMP + diphosphate + H(+). Catalyzes the 2-thiolation of uridine at the wobble position (U34) of tRNA, leading to the formation of s(2)U34. The sequence is that of tRNA-specific 2-thiouridylase MnmA from Histophilus somni (strain 2336) (Haemophilus somnus).